The chain runs to 1400 residues: MELLPPLPQSFLLLLLLPAKPAAGEDWQCPRTPYAASRDFDVKYVVPSFSAGGLVQAMVTYEGDRNESAVFVAIRNRLHVLGPDLKSVQSLATGPAGDPGCQTCAACGPGPHGPPGDTDTKVLVLDPALPALVSCGSSLQGRCFLHDLEPQGTAVHLAAPACLFSAHHNRPDDCPDCVASPLGTRVTVVEQGQASYFYVASSLDAAVAASFSPRSVSIRRLKADASGFAPGFVALSVLPKHLVSYSIEYVHSFHTGAFVYFLTVQPASVTDDPSALHTRLARLSATEPELGDYRELVLDCRFAPKRRRRGAPEGGQPYPVLRVAHSAPVGAQLATELSIAEGQEVLFGVFVTGKDGGPGVGPNSVVCAFPIDLLDTLIDEGVERCCESPVHPGLRRGLDFFQSPSFCPNPPGLEALSPNTSCRHFPLLVSSSFSRVDLFNGLLGPVQVTALYVTRLDNVTVAHMGTMDGRILQVELVRSLNYLLYVSNFSLGDSGQPVQRDVSRLGDHLLFASGDQVFQVPIQGPGCRHFLTCGRCLRAWHFMGCGWCGNMCGQQKECPGSWQQDHCPPKLTEFHPHSGPLRGSTRLTLCGSNFYLHPSGLVPEGTHQVTVGQSPCRPLPKDSSKLRPVPRKDFVEEFECELEPLGTQAVGPTNVSLTVTNMPPGKHFRVDGTSVLRGFSFMEPVLIAVQPLFGPRAGGTCLTLEGQSLSVGTSRAVLVNGTECLLARVSEGQLLCATPPGATVASVPLSLQVGGAQVPGSWTFQYREDPVVLSISPNCGYINSHITICGQHLTSAWHLVLSFHDGLRAVESRCERQLPEQQLCRLPEYVVRDPQGWVAGNLSARGDGAAGFTLPGFRFLPPPHPPSANLVPLKPEEHAIKFEYIGLGAVADCVGINVTVGGESCQHEFRGDMVVCPLPPSLQLGQDGAPLQVCVDGECHILGRVVRPGPDGVPQSTLLGILLPLLLLVAALATALVFSYWWRRKQLVLPPNLNDLASLDQTAGATPLPILYSGSDYRSGLALPAIDGLDSTTCVHGASFSDSEDESCVPLLRKESIQLRDLDSALLAEVKDVLIPHERVVTHSDRVIGKGHFGVVYHGEYIDQAQNRIQCAIKSLSRITEMQQVEAFLREGLLMRGLNHPNVLALIGIMLPPEGLPHVLLPYMCHGDLLQFIRSPQRNPTVKDLISFGLQVARGMEYLAEQKFVHRDLAARNCMLDESFTVKVADFGLARDILDREYYSVQQHRHARLPVKWMALESLQTYRFTTKSDVWSFGVLLWELLTRGAPPYRHIDPFDLTHFLAQGRRLPQPEYCPDSLYQVMQQCWEADPAVRPTFRVLVGEVEQIVSALLGDHYVQLPATYMNLGPSTSHEMNVRPEQPQFSPMPGNVRRPRPLSEPPRPT.

The signal sequence occupies residues 1-24 (MELLPPLPQSFLLLLLLPAKPAAG). At 25-957 (EDWQCPRTPY…PGPDGVPQST (933 aa)) the chain is on the extracellular side. In terms of domain architecture, Sema spans 31-522 (RTPYAASRDF…SGDQVFQVPI (492 aa)). N-linked (GlcNAc...) asparagine glycosylation occurs at Asn66. Disulfide bonds link Cys101–Cys104, Cys107–Cys162, Cys135–Cys143, Cys174–Cys177, Cys300–Cys367, Cys385–Cys407, and Cys386–Cys422. N-linked (GlcNAc...) asparagine glycosylation is found at Asn419, Asn458, and Asn488. Cystine bridges form between Cys527/Cys545, Cys533/Cys567, Cys536/Cys552, and Cys548/Cys558. 3 consecutive IPT/TIG domains span residues 569 to 671 (PKLT…FRVD), 684 to 767 (PVLI…FQYR), and 770 to 860 (PVVL…FRFL). Residues Asn654, Asn720, Asn841, and Asn897 are each glycosylated (N-linked (GlcNAc...) asparagine). Residues 958-978 (LLGILLPLLLLVAALATALVF) form a helical membrane-spanning segment. The Cytoplasmic portion of the chain corresponds to 979-1400 (SYWWRRKQLV…RPLSEPPRPT (422 aa)). Positions 1082 to 1345 (THSDRVIGKG…VLVGEVEQIV (264 aa)) constitute a Protein kinase domain. ATP-binding positions include 1088 to 1096 (IGKGHFGVV), Lys1114, and 1161 to 1164 (LPYM). Asp1208 serves as the catalytic Proton acceptor. Arg1212 provides a ligand contact to ATP. Tyr1238, Tyr1239, Tyr1353, and Tyr1360 each carry phosphotyrosine; by autocatalysis. Residues 1367-1400 (TSHEMNVRPEQPQFSPMPGNVRRPRPLSEPPRPT) are disordered.

The protein belongs to the protein kinase superfamily. Tyr protein kinase family. In terms of assembly, heterodimer of an alpha chain and a beta chain which are disulfide linked. Binds PLXNB1. Associates with and is negatively regulated by HYAL2. Interacts when phosphorylated with downstream effectors including PIK3R1, PCLG1, GRB2 and GAB1. Interacts with integrin beta1/ITGB1 in a ligand-independent fashion. In terms of processing, proteolytic processing yields the two subunits. Post-translationally, autophosphorylated in response to ligand binding on Tyr-1238 and Tyr-1239 in the kinase domain leading to further phosphorylation of Tyr-1353 and Tyr-1360 in the C-terminal multifunctional docking site. Ubiquitinated. Ubiquitination by CBL regulates the receptor stability and activity through proteasomal degradation. In terms of processing, O-mannosylation of IPT/TIG domains on Thr or Ser residues by TMEM260 is required for protein maturation. O-mannosylated residues are composed of single mannose glycans that are not elongated or modified. Expressed in colon, skin, lung and bone marrow.

It is found in the membrane. The enzyme catalyses L-tyrosyl-[protein] + ATP = O-phospho-L-tyrosyl-[protein] + ADP + H(+). With respect to regulation, in its inactive state, the C-terminal tail interacts with the catalytic domain and inhibits the kinase activity. Upon ligand binding, the C-terminal tail is displaced and becomes phosphorylated, thus increasing the kinase activity. Receptor tyrosine kinase that transduces signals from the extracellular matrix into the cytoplasm by binding to MST1 ligand. Regulates many physiological processes including cell survival, migration and differentiation. Ligand binding at the cell surface induces autophosphorylation of RON on its intracellular domain that provides docking sites for downstream signaling molecules. Following activation by ligand, interacts with the PI3-kinase subunit PIK3R1, PLCG1 or the adapter GAB1. Recruitment of these downstream effectors by RON leads to the activation of several signaling cascades including the RAS-ERK, PI3 kinase-AKT, or PLCgamma-PKC. RON signaling activates the wound healing response by promoting epithelial cell migration, proliferation as well as survival at the wound site. Also plays a role in the innate immune response by regulating the migration and phagocytic activity of macrophages. Alternatively, RON can also promote signals such as cell migration and proliferation in response to growth factors other than MST1 ligand. The protein is Macrophage-stimulating protein receptor (MST1R) of Homo sapiens (Human).